The primary structure comprises 106 residues: PAT complex subunit Asterix (106 aa).

Positions 1-10 (MSANSMSDPR) are enriched in polar residues. The segment at 1 to 29 (MSANSMSDPRSPNKVLRYKPPPSECNPAL) is disordered. Ser2 carries the N-acetylserine modification. The Cytoplasmic segment spans residues 2–32 (SANSMSDPRSPNKVLRYKPPPSECNPALDDP). The chain crosses the membrane as a helical span at residues 33–51 (TPDYMNLLGMIFSMCGLML). Position 52 (Lys52) is a topological domain, lumenal. Residues 53–70 (LKWCAWVAVYCSFISFAN) traverse the membrane as a helical segment. At 71–74 (SRSS) the chain is on the cytoplasmic side. Residues 75–95 (EDTKQMMSSFMLSISAVVMSY) traverse the membrane as a helical segment. Over 96–106 (LQNPQPMTPPW) the chain is Lumenal.

Belongs to the Asterix family. As to quaternary structure, component of the PAT complex, composed of WDR83OS/Asterix and CCDC47. The PAT complex is part of the multi-pass translocon (MPT) complex, composed of three subcomplexes, the GEL complex (composed of RAB5IF/OPTI and TMCO1), the BOS complex (composed of NCLN/Nicalin, NOMO1 and TMEM147) and the PAT complex (composed of WDR83OS/Asterix and CCDC47). The MPT complex associates with the SEC61 complex.

The protein localises to the endoplasmic reticulum membrane. Component of the multi-pass translocon (MPT) complex that mediates insertion of multi-pass membrane proteins into the lipid bilayer of membranes. The MPT complex takes over after the SEC61 complex: following membrane insertion of the first few transmembrane segments of proteins by the SEC61 complex, the MPT complex occludes the lateral gate of the SEC61 complex to promote insertion of subsequent transmembrane regions. Within the MPT complex, the PAT subcomplex sequesters any highly polar regions in the transmembrane domains away from the non-polar membrane environment until they can be buried in the interior of the fully assembled protein. Within the PAT subcomplex, WDR83OS/Asterix binds to and redirects the substrate to a location behind the SEC61 complex. The chain is PAT complex subunit Asterix (WDR83OS) from Sus scrofa (Pig).